Reading from the N-terminus, the 330-residue chain is Ketol-acid reductoisomerase (NADP(+)) (330 aa).

A KARI N-terminal Rossmann domain is found at 1–181; sequence MNIYYEQDAD…GGTKAGVIET (181 aa). NADP(+)-binding positions include 24-27, Lys47, Ser50, Ser52, and 82-85; these read YGSQ and DQTQ. Residue His107 is part of the active site. Gly133 contacts NADP(+). The 146-residue stretch at 182-327 folds into the KARI C-terminal knotted domain; it reads SFKDETETDL…AKLRGMMSWL (146 aa). Residues Asp190, Glu194, Glu226, and Glu230 each contribute to the Mg(2+) site. Ser251 provides a ligand contact to substrate.

Belongs to the ketol-acid reductoisomerase family. The cofactor is Mg(2+).

The catalysed reaction is (2R)-2,3-dihydroxy-3-methylbutanoate + NADP(+) = (2S)-2-acetolactate + NADPH + H(+). It carries out the reaction (2R,3R)-2,3-dihydroxy-3-methylpentanoate + NADP(+) = (S)-2-ethyl-2-hydroxy-3-oxobutanoate + NADPH + H(+). Its pathway is amino-acid biosynthesis; L-isoleucine biosynthesis; L-isoleucine from 2-oxobutanoate: step 2/4. It participates in amino-acid biosynthesis; L-valine biosynthesis; L-valine from pyruvate: step 2/4. Involved in the biosynthesis of branched-chain amino acids (BCAA). Catalyzes an alkyl-migration followed by a ketol-acid reduction of (S)-2-acetolactate (S2AL) to yield (R)-2,3-dihydroxy-isovalerate. In the isomerase reaction, S2AL is rearranged via a Mg-dependent methyl migration to produce 3-hydroxy-3-methyl-2-ketobutyrate (HMKB). In the reductase reaction, this 2-ketoacid undergoes a metal-dependent reduction by NADPH to yield (R)-2,3-dihydroxy-isovalerate. The protein is Ketol-acid reductoisomerase (NADP(+)) of Chlorobaculum tepidum (strain ATCC 49652 / DSM 12025 / NBRC 103806 / TLS) (Chlorobium tepidum).